A 234-amino-acid chain; its full sequence is GTP cyclohydrolase 1 type 2 homolog (234 aa).

A divalent metal cation contacts are provided by histidine 61, histidine 62, aspartate 80, histidine 195, and glutamate 199.

Belongs to the GTP cyclohydrolase I type 2/NIF3 family. As to quaternary structure, homohexamer.

The protein is GTP cyclohydrolase 1 type 2 homolog of Methanothermobacter thermautotrophicus (strain ATCC 29096 / DSM 1053 / JCM 10044 / NBRC 100330 / Delta H) (Methanobacterium thermoautotrophicum).